The primary structure comprises 213 residues: Large ribosomal subunit protein uL3 (213 aa).

Residue glutamine 151 is modified to N5-methylglutamine.

Belongs to the universal ribosomal protein uL3 family. In terms of assembly, part of the 50S ribosomal subunit. Forms a cluster with proteins L14 and L19. In terms of processing, methylated by PrmB.

One of the primary rRNA binding proteins, it binds directly near the 3'-end of the 23S rRNA, where it nucleates assembly of the 50S subunit. In Rhizobium etli (strain ATCC 51251 / DSM 11541 / JCM 21823 / NBRC 15573 / CFN 42), this protein is Large ribosomal subunit protein uL3.